The following is a 470-amino-acid chain: Putative F-box/LRR-repeat protein At3g58920 (470 aa).

An F-box domain is found at 1-53 (MDRISNLPNEIICHIVSFLSAKEAAFASVLSKRWQNLFTIVQKLEFDDSVKNQ). 6 LRR repeats span residues 114-142 (KLEI…KLTS), 143-170 (CIFA…FLKS), 173-198 (FSDL…TIYD), 225-250 (FTYF…KYID), 287-312 (EDDP…HLST), and 342-367 (YECF…MIKG).

The protein is Putative F-box/LRR-repeat protein At3g58920 of Arabidopsis thaliana (Mouse-ear cress).